The sequence spans 124 residues: Small ribosomal subunit protein uS13 (124 aa).

Positions Gly-95 to Arg-124 are disordered. Residues Gln-101 to Arg-124 are compositionally biased toward basic residues.

This sequence belongs to the universal ribosomal protein uS13 family. Part of the 30S ribosomal subunit. Forms a loose heterodimer with protein S19. Forms two bridges to the 50S subunit in the 70S ribosome.

Its function is as follows. Located at the top of the head of the 30S subunit, it contacts several helices of the 16S rRNA. In the 70S ribosome it contacts the 23S rRNA (bridge B1a) and protein L5 of the 50S subunit (bridge B1b), connecting the 2 subunits; these bridges are implicated in subunit movement. Contacts the tRNAs in the A and P-sites. The protein is Small ribosomal subunit protein uS13 of Coprothermobacter proteolyticus (strain ATCC 35245 / DSM 5265 / OCM 4 / BT).